Reading from the N-terminus, the 463-residue chain is Dipeptidyl peptidase 1 (463 aa).

A signal peptide spans 1–24; that stretch reads MGPWSGSRLVALLLLVYGAGSVRG. 2 N-linked (GlcNAc...) asparagine glycosylation sites follow: Asn29 and Asn53. Disulfide bonds link Cys30–Cys118 and Cys54–Cys136. A propeptide spanning residues 135-230 is cleaved from the precursor; that stretch reads ACFTGRKTGN…TAEIQKKILH (96 aa). Asn144 carries N-linked (GlcNAc...) asparagine glycosylation. 3 disulfides stabilise this stretch: Cys255-Cys298, Cys291-Cys331, and Cys321-Cys337. The active site involves Cys258. An N-linked (GlcNAc...) asparagine glycan is attached at Asn276. Positions 302 and 304 each coordinate chloride. Chloride is bound at residue Tyr347. Catalysis depends on residues His405 and Asn427.

The protein belongs to the peptidase C1 family. As to quaternary structure, tetramer of heterotrimers consisting of exclusion domain, heavy- and light chains. Requires chloride as cofactor.

Its subcellular location is the lysosome. The catalysed reaction is Release of an N-terminal dipeptide, Xaa-Yaa-|-Zaa-, except when Xaa is Arg or Lys, or Yaa or Zaa is Pro.. Its function is as follows. Thiol protease. Has dipeptidylpeptidase activity. Active against a broad range of dipeptide substrates composed of both polar and hydrophobic amino acids. Proline cannot occupy the P1 position and arginine cannot occupy the P2 position of the substrate. Can act as both an exopeptidase and endopeptidase. Activates serine proteases such as elastase, cathepsin G and granzymes A and B. The chain is Dipeptidyl peptidase 1 (CTSC) from Bos taurus (Bovine).